The primary structure comprises 485 residues: MDLLATTSAAAVSSYALLSTIYKSVQALYAQPAINSSLDNLGQAEVVVPAVDVIVPCFNENPNTLAECLESIASQDYAGKMQVYVVDDGSANRDVVAPVHRIYASDPRFSFILLANNVGKRKAQIAAIRSSSGDLVLNVDSDTILAADVVTKLVLKMHDPGIGAAMGQLIASNRNQTWLTRLIDMEYWLACNEERAAQARFGAVMCCCGPCAMYRRSALALLLDQYEAQFFRGKPSDFGEDRHLTILMLKAGFRTEYVPDAIAATVVPHSLRPYLRQQLRWARSTFRDTFLAWRLLPELDGYLTLDVIGQNLGPLLLAISSLAALAQLLIDGSIPWWTGLTIAAMTTVRCCVAALRARELRFIGFSLHTPINICLLLPLKAYALCTLSNSDWLSRKVTDMPTEEGKQPVILHPNAGRSPAGVGGRLLLFVRRRYRSLHRAWRRRRVFPVAIVRLSTNKWSADDSGRKPSVIRARVGCRRPVAPRH.

It belongs to the NodC/HAS family.

It is found in the cell membrane. In terms of biological role, may be involved in the synthesis of NodRm-1, a sulfated N-acyl-beta-1,4-tetrasaccharide of N-acetylglucosamine which initiates a series of events in the host plant species leading eventually to nodulation. In Bradyrhizobium diazoefficiens (strain JCM 10833 / BCRC 13528 / IAM 13628 / NBRC 14792 / USDA 110), this protein is N-acetylglucosaminyltransferase (nodC).